A 345-amino-acid chain; its full sequence is Glycerol-3-phosphate dehydrogenase [NAD(P)+] (345 aa).

NADPH contacts are provided by serine 11, tryptophan 12, histidine 32, arginine 33, and lysine 106. Sn-glycerol 3-phosphate-binding residues include lysine 106, glycine 137, and serine 139. Alanine 141 is an NADPH binding site. Residues lysine 192, aspartate 245, serine 255, arginine 256, and asparagine 257 each coordinate sn-glycerol 3-phosphate. Lysine 192 serves as the catalytic Proton acceptor. NADPH is bound at residue arginine 256. 2 residues coordinate NADPH: valine 280 and glutamate 282.

It belongs to the NAD-dependent glycerol-3-phosphate dehydrogenase family.

Its subcellular location is the cytoplasm. It carries out the reaction sn-glycerol 3-phosphate + NAD(+) = dihydroxyacetone phosphate + NADH + H(+). It catalyses the reaction sn-glycerol 3-phosphate + NADP(+) = dihydroxyacetone phosphate + NADPH + H(+). It functions in the pathway membrane lipid metabolism; glycerophospholipid metabolism. Functionally, catalyzes the reduction of the glycolytic intermediate dihydroxyacetone phosphate (DHAP) to sn-glycerol 3-phosphate (G3P), the key precursor for phospholipid synthesis. In Bacillus pumilus (strain SAFR-032), this protein is Glycerol-3-phosphate dehydrogenase [NAD(P)+].